Here is a 76-residue protein sequence, read N- to C-terminus: U7-lycotoxin-Ls1b (76 aa).

A signal peptide spans 1-22; sequence MKLISFTGLALLLIVSLIDVEA. Residues 23-26 constitute a propeptide that is removed on maturation; that stretch reads QNEG.

This sequence belongs to the neurotoxin 19 (CSTX) family. 07 (U7-Lctx) subfamily. In terms of processing, contains 4 disulfide bonds. As to expression, expressed by the venom gland.

The protein localises to the secreted. This chain is U7-lycotoxin-Ls1b, found in Lycosa singoriensis (Wolf spider).